Consider the following 78-residue polypeptide: Short neurotoxin OH-26 (78 aa).

Residues 1 to 21 (MKNLLLTFLVVTIVCLDLGYT) form the signal peptide. Disulfide bonds link Cys-24-Cys-40, Cys-33-Cys-58, Cys-62-Cys-70, and Cys-71-Cys-76.

The protein belongs to the three-finger toxin family. Short-chain subfamily. In terms of tissue distribution, expressed by the venom gland.

Its subcellular location is the secreted. In terms of biological role, this three-finger toxin binds and inhibits the nicotinic acetylcholine receptor (nAChR). The chain is Short neurotoxin OH-26 from Ophiophagus hannah (King cobra).